We begin with the raw amino-acid sequence, 300 residues long: Zinc finger CCCH-type antiviral protein 1-like (300 aa).

Ala2 is subject to N-acetylalanine. A compositionally biased stretch (polar residues) spans 252–263; that stretch reads NTDNSSPSTEHS. The tract at residues 252–300 is disordered; sequence NTDNSSPSTEHSQGLEKQGVHAAGAAEAGPLASVPAQSAKKPCPVSCEK. A compositionally biased stretch (low complexity) spans 271–283; the sequence is VHAAGAAEAGPLA.

This Homo sapiens (Human) protein is Zinc finger CCCH-type antiviral protein 1-like (ZC3HAV1L).